A 268-amino-acid chain; its full sequence is Myeloid leukemia factor 1 (268 aa).

Phosphoserine occurs at positions 6, 8, and 32. Positions 50–125 (RVHNRRGHND…IGDEPPKVFQ (76 aa)) are interaction with COPS3. The interval 208–268 (PGRHNLENTR…KGSSVKSNKK (61 aa)) is disordered. Composition is skewed to basic and acidic residues over residues 226-237 (PGSRELKRREKP) and 244-257 (EHGRRSDVLGDKLH).

This sequence belongs to the MLF family. Interacts with CENPU. Also interacts with NRBP1/MADM, YWHAZ/14-3-3-zeta and HNRPUL2/MANP. NRBP1 recruits a serine kinase which phosphorylates both itself and MLF1. Phosphorylated MLF1 then binds to YWHAZ and is retained in the cytoplasm. Retained in the nucleus by binding to HNRPUL2. Binds to COPS3/CSN3 which is required for suppression of COP1 and activation of p53. Phosphorylation is required for binding to YWHAZ.

The protein localises to the cytoplasm. It is found in the nucleus. The protein resides in the cell projection. Its subcellular location is the cilium. It localises to the cytoskeleton. The protein localises to the cilium basal body. Involved in lineage commitment of primary hemopoietic progenitors by restricting erythroid formation and enhancing myeloid formation. Interferes with erythropoietin-induced erythroid terminal differentiation by preventing cells from exiting the cell cycle through suppression of CDKN1B/p27Kip1 levels. Suppresses COP1 activity via CSN3 which activates p53 and induces cell cycle arrest. Binds DNA and affects the expression of a number of genes so may function as a transcription factor in the nucleus. This Pongo abelii (Sumatran orangutan) protein is Myeloid leukemia factor 1 (MLF1).